The sequence spans 354 residues: Protein sex-lethal (354 aa).

The interval 1–20 (MYGNNNPGSNNNNGGYPPYG) is disordered. RRM domains follow at residues 127–205 (TNLI…YARP) and 213–293 (TNLY…LAQE).

In terms of assembly, part of a complex containing fl(2)d, Sxl and vir. Interacts with nito. Interacts with Unr; cooperates with Sxl to prevent translation of msl-2 transcripts. Interacts with how; promoting nuclear retention of msl-2 transcripts. As to expression, the embryo-specific isoform is not expressed in the pole cells, which are the progenitors of the germline.

It is found in the nucleus. The protein localises to the cytoplasm. In terms of biological role, sex determination switch protein, which controls sexual development and dosage compensation in females. Sxl protein is only active in females: it is inactive in males throughout development. Acts as a mRNA-binding protein, which specifically binds to a subset of pre-mRNAs and mRNAs and regulates their processing and/or translation. Promotes sexual development by controlling the female-specific alternative splicing of the transformer (tra) pre-mRNA: binds tightly to a characteristic uridine-rich polypyrimidine tract at the non-sex specific 3' splice site in one of the tra introns, preventing the general splicing factor U2AF from binding to this site and forcing it to bind to the female-specific 3' splice site. Acts as an inhibitor of dosage compensation in females by preventing production of msl-2 protein, an essential component of the MSL complex, the complex that mediates X-chromosome dosage compensation. Specifially binds to uridine stretches in both the 5'- and 3'-UTR of msl-2 transcripts. Sxl first acts at the splicing level by promoting retention of an intron in the 5' UTR of msl-2 pre-mRNA. The retained intron contains Sxl-binding sites that are required for subsequent steps of repression: after msl-2 mRNA export into the cytoplasm, Sxl coordinates its translational repression by targeting early steps of translation initiation. Together with how, Sxl also prevents production of msl-2 protein by preventing nuclear export of msl-2 transcripts. The polypeptide is Protein sex-lethal (Drosophila subobscura (Fruit fly)).